A 149-amino-acid polypeptide reads, in one-letter code: D-aminoacyl-tRNA deacylase (149 aa).

Positions 137-138 (GP) match the Gly-cisPro motif, important for rejection of L-amino acids motif.

The protein belongs to the DTD family. Homodimer.

Its subcellular location is the cytoplasm. It catalyses the reaction glycyl-tRNA(Ala) + H2O = tRNA(Ala) + glycine + H(+). It carries out the reaction a D-aminoacyl-tRNA + H2O = a tRNA + a D-alpha-amino acid + H(+). In terms of biological role, an aminoacyl-tRNA editing enzyme that deacylates mischarged D-aminoacyl-tRNAs. Also deacylates mischarged glycyl-tRNA(Ala), protecting cells against glycine mischarging by AlaRS. Acts via tRNA-based rather than protein-based catalysis; rejects L-amino acids rather than detecting D-amino acids in the active site. By recycling D-aminoacyl-tRNA to D-amino acids and free tRNA molecules, this enzyme counteracts the toxicity associated with the formation of D-aminoacyl-tRNA entities in vivo and helps enforce protein L-homochirality. This Thermoanaerobacter pseudethanolicus (strain ATCC 33223 / 39E) (Clostridium thermohydrosulfuricum) protein is D-aminoacyl-tRNA deacylase.